A 484-amino-acid chain; its full sequence is Coronin-1B (484 aa).

Ser2 carries the post-translational modification Phosphoserine. WD repeat units follow at residues 80–120, 130–170, 174–213, 217–260, and 265–305; these read GHTG…LTSP, GHTK…ELYR, LHPD…LVAE, AHEG…EPMA, and DSSN…PYIH. A coiled-coil region spans residues 447-481; the sequence is KLEEVMHGLRALRVLVKEQGERISRLEEHLGRMEN.

Belongs to the WD repeat coronin family. Forms homooligomers, but does not form complexes with the other coronins. Interacts with Arp2/3 complex components, including ACTR2, ARPC1B and ARPC2. Binds actin. Post-translationally, phosphorylation on Ser-2 regulates the interaction with the Arp2/3 complex and cell motility in fibroblasts. Phosphorylation does not seem to affect subcellular location.

It is found in the cytoplasm. The protein resides in the cytoskeleton. The protein localises to the stress fiber. Functionally, regulates leading edge dynamics and cell motility in fibroblasts. May be involved in cytokinesis and signal transduction. This Rattus norvegicus (Rat) protein is Coronin-1B (Coro1b).